Here is a 134-residue protein sequence, read N- to C-terminus: Iron-sulfur cluster insertion protein ErpA (134 aa).

Positions 47, 126, and 128 each coordinate iron-sulfur cluster.

This sequence belongs to the HesB/IscA family. In terms of assembly, homodimer. The cofactor is iron-sulfur cluster.

Its function is as follows. Required for insertion of 4Fe-4S clusters for at least IspG. The polypeptide is Iron-sulfur cluster insertion protein ErpA (Coxiella burnetii (strain RSA 331 / Henzerling II)).